Here is a 615-residue protein sequence, read N- to C-terminus: Protein translocase subunit SecD (615 aa).

6 consecutive transmembrane segments (helical) span residues tyrosine 10–glycine 30, glutamine 452–tyrosine 472, leucine 477–leucine 497, methionine 504–isoleucine 524, glycine 548–valine 570, and glycine 585–tyrosine 605.

The protein belongs to the SecD/SecF family. SecD subfamily. Forms a complex with SecF. Part of the essential Sec protein translocation apparatus which comprises SecA, SecYEG and auxiliary proteins SecDF-YajC and YidC.

The protein localises to the cell inner membrane. Functionally, part of the Sec protein translocase complex. Interacts with the SecYEG preprotein conducting channel. SecDF uses the proton motive force (PMF) to complete protein translocation after the ATP-dependent function of SecA. The protein is Protein translocase subunit SecD of Shigella flexneri.